The chain runs to 578 residues: Isocitrate dehydrogenase kinase/phosphatase (578 aa).

Residues 315–321 (APGIRGM) and Lys336 each bind ATP. The active site involves Asp371.

This sequence belongs to the AceK family.

It localises to the cytoplasm. It carries out the reaction L-seryl-[isocitrate dehydrogenase] + ATP = O-phospho-L-seryl-[isocitrate dehydrogenase] + ADP + H(+). Bifunctional enzyme which can phosphorylate or dephosphorylate isocitrate dehydrogenase (IDH) on a specific serine residue. This is a regulatory mechanism which enables bacteria to bypass the Krebs cycle via the glyoxylate shunt in response to the source of carbon. When bacteria are grown on glucose, IDH is fully active and unphosphorylated, but when grown on acetate or ethanol, the activity of IDH declines drastically concomitant with its phosphorylation. The chain is Isocitrate dehydrogenase kinase/phosphatase from Shigella boydii serotype 18 (strain CDC 3083-94 / BS512).